Reading from the N-terminus, the 145-residue chain is D-aminoacyl-tRNA deacylase (145 aa).

Residues 137–138 (GP) carry the Gly-cisPro motif, important for rejection of L-amino acids motif.

The protein belongs to the DTD family. In terms of assembly, homodimer.

It localises to the cytoplasm. The enzyme catalyses glycyl-tRNA(Ala) + H2O = tRNA(Ala) + glycine + H(+). The catalysed reaction is a D-aminoacyl-tRNA + H2O = a tRNA + a D-alpha-amino acid + H(+). Functionally, an aminoacyl-tRNA editing enzyme that deacylates mischarged D-aminoacyl-tRNAs. Also deacylates mischarged glycyl-tRNA(Ala), protecting cells against glycine mischarging by AlaRS. Acts via tRNA-based rather than protein-based catalysis; rejects L-amino acids rather than detecting D-amino acids in the active site. By recycling D-aminoacyl-tRNA to D-amino acids and free tRNA molecules, this enzyme counteracts the toxicity associated with the formation of D-aminoacyl-tRNA entities in vivo and helps enforce protein L-homochirality. This Cereibacter sphaeroides (strain ATCC 17029 / ATH 2.4.9) (Rhodobacter sphaeroides) protein is D-aminoacyl-tRNA deacylase.